Consider the following 129-residue polypeptide: Large ribosomal subunit protein bL17 (129 aa).

It belongs to the bacterial ribosomal protein bL17 family. As to quaternary structure, part of the 50S ribosomal subunit. Contacts protein L32.

The chain is Large ribosomal subunit protein bL17 from Stutzerimonas stutzeri (strain A1501) (Pseudomonas stutzeri).